A 504-amino-acid chain; its full sequence is Anaerobic nitric oxide reductase transcription regulator NorR (504 aa).

4-aspartylphosphate is present on D57. The 230-residue stretch at M187–V416 folds into the Sigma-54 factor interaction domain. Residues G215–E222 and A278–E287 contribute to the ATP site. A DNA-binding region (H-T-H motif) is located at residues W479–K498.

Its pathway is nitrogen metabolism; nitric oxide reduction. Required for the expression of anaerobic nitric oxide (NO) reductase, acts as a transcriptional activator for at least the norVW operon. Activation also requires sigma-54. This chain is Anaerobic nitric oxide reductase transcription regulator NorR, found in Shigella sonnei (strain Ss046).